Here is a 119-residue protein sequence, read N- to C-terminus: MLRATKVCIYPTPEQAEHLNAQFGAVRFVYSKSLHIKKHAYQRHGVSLTPRKDIKPLLAVAKKFRKFRKFRKYAWLKEYDSIALQQAVINLDVAFSNCFNPKLKARFPMFKRKHGKLLG.

Expressed but non-essential protein, involved in the virulence of Salmonellas. The protein is Virulence protein VsdF (vsdF) of Salmonella dublin.